We begin with the raw amino-acid sequence, 350 residues long: Holliday junction branch migration complex subunit RuvB (350 aa).

The tract at residues 1–22 is disordered; that stretch reads MDHTASLSPVRPEAQPTDDRER. Residues 1 to 185 form a large ATPase domain (RuvB-L) region; that stretch reads MDHTASLSPV…FGIVERFEFY (185 aa). ATP-binding positions include leucine 24, arginine 25, glycine 66, lysine 69, threonine 70, threonine 71, 132 to 134, arginine 175, tyrosine 185, and arginine 222; that span reads EDY. Threonine 70 contributes to the Mg(2+) binding site. Residues 186–256 are small ATPAse domain (RuvB-S); sequence TPEELAAIVQ…IVRAGLAHLK (71 aa). Residues 259–350 are head domain (RuvB-H); it reads ELGLELHDIQ…PHSPEQGTLL (92 aa). Arginine 314 and arginine 319 together coordinate DNA.

The protein belongs to the RuvB family. As to quaternary structure, homohexamer. Forms an RuvA(8)-RuvB(12)-Holliday junction (HJ) complex. HJ DNA is sandwiched between 2 RuvA tetramers; dsDNA enters through RuvA and exits via RuvB. An RuvB hexamer assembles on each DNA strand where it exits the tetramer. Each RuvB hexamer is contacted by two RuvA subunits (via domain III) on 2 adjacent RuvB subunits; this complex drives branch migration. In the full resolvosome a probable DNA-RuvA(4)-RuvB(12)-RuvC(2) complex forms which resolves the HJ.

It localises to the cytoplasm. The catalysed reaction is ATP + H2O = ADP + phosphate + H(+). Its function is as follows. The RuvA-RuvB-RuvC complex processes Holliday junction (HJ) DNA during genetic recombination and DNA repair, while the RuvA-RuvB complex plays an important role in the rescue of blocked DNA replication forks via replication fork reversal (RFR). RuvA specifically binds to HJ cruciform DNA, conferring on it an open structure. The RuvB hexamer acts as an ATP-dependent pump, pulling dsDNA into and through the RuvAB complex. RuvB forms 2 homohexamers on either side of HJ DNA bound by 1 or 2 RuvA tetramers; 4 subunits per hexamer contact DNA at a time. Coordinated motions by a converter formed by DNA-disengaged RuvB subunits stimulates ATP hydrolysis and nucleotide exchange. Immobilization of the converter enables RuvB to convert the ATP-contained energy into a lever motion, pulling 2 nucleotides of DNA out of the RuvA tetramer per ATP hydrolyzed, thus driving DNA branch migration. The RuvB motors rotate together with the DNA substrate, which together with the progressing nucleotide cycle form the mechanistic basis for DNA recombination by continuous HJ branch migration. Branch migration allows RuvC to scan DNA until it finds its consensus sequence, where it cleaves and resolves cruciform DNA. The chain is Holliday junction branch migration complex subunit RuvB from Treponema pallidum (strain Nichols).